The sequence spans 56 residues: Large ribosomal subunit protein bL33 (56 aa).

The protein belongs to the bacterial ribosomal protein bL33 family.

This Actinobacillus pleuropneumoniae serotype 5b (strain L20) protein is Large ribosomal subunit protein bL33.